A 450-amino-acid chain; its full sequence is Ammonium transporter Rh type A (450 aa).

Residues 1 to 4 (MRFK) lie on the Cytoplasmic side of the membrane. The chain crosses the membrane as a helical span at residues 5-25 (FSLIALSLEVVMIVSFALFVE). Residues 26–72 (YETSQNGSQKSASQQNASQQNAAAQQNASQQGNASSPAKEDQFFQLY) are Extracellular-facing. Residues asparagine 31, asparagine 41, asparagine 52, and asparagine 58 are each glycosylated (N-linked (GlcNAc...) asparagine). A disordered region spans residues 34–61 (QKSASQQNASQQNAAAQQNASQQGNASS). The chain crosses the membrane as a helical span at residues 73 to 93 (PLFQHVHVMIFVGFGFLMTFL). At 94-97 (KKYG) the chain is on the cytoplasmic side. A helical membrane pass occupies residues 98–118 (FSGVGFNLFLAALGLQWGTIV). The Extracellular portion of the chain corresponds to 119 to 134 (QGLLHSHGLKFPFRIK). Residues 135-155 (NMINADFSTATVLISFGAVLG) form a helical membrane-spanning segment. Residues 156–159 (KTSP) lie on the Cytoplasmic side of the membrane. Residues 160-180 (IQMIIMTILEIAVFAGNEHLV) form a helical membrane-spanning segment. At 181-189 (TEIFKASDT) the chain is on the extracellular side. A helical membrane pass occupies residues 190–210 (GASMTIHAFGAYFGLAVAGVL). Over 211 to 229 (YRSGLKHGHPNEESVYHSD) the chain is Cytoplasmic. A helical transmembrane segment spans residues 230–250 (LFAMIGTLFLWMFWPSFNSAI). Residues 251–260 (AQPENNQYRA) are Extracellular-facing. The chain crosses the membrane as a helical span at residues 261 to 281 (IVNTYMSLAACVITAYALSSL). At 282-289 (VERRGRLD) the chain is on the cytoplasmic side. The chain crosses the membrane as a helical span at residues 290-307 (MVHIQNATLAGGVAVGTC). At 308–311 (ADME) the chain is on the extracellular side. A helical membrane pass occupies residues 312–332 (IPLYFAMTIGSIAGIISVLGY). At 333–349 (KFLSPLLAHKLMIHDTC) the chain is on the cytoplasmic side. The helical transmembrane segment at 350–370 (GVHNLHGLPGVFGGLASIVAI) threads the bilayer. Over 371–384 (SWGKSTVSTMAMQA) the chain is Extracellular. A helical transmembrane segment spans residues 385 to 405 (TALGSSIGSAIVGGLVTGLIL). At 406-450 (KLPVWNQPPDEYCFDDSVSWKVPKYRELDNYFFQHVTHNHVEHEV) the chain is on the cytoplasmic side.

The protein belongs to the ammonium transporter (TC 2.A.49) family. Rh subfamily. In terms of assembly, homodimer. Heterotrimer; a RHCE monomer interacts with a RHAG homodimer. Component of the ankyrin-1 complex in the erythrocyte, composed of ANK1, RHCE, RHAG, SLC4A1, EPB42, GYPA, GYPB and AQP1. Interacts with GYPB (via the N-terminal); this interaction bridges the (RHAG)2(RHCE) heterotrimer with the SLC4A1 Band 3 I dimer complexed with GYPA. Glycosylated.

Its subcellular location is the membrane. It catalyses the reaction methylamine(out) = methylamine(in). The catalysed reaction is NH4(+)(in) = NH4(+)(out). It carries out the reaction CO2(out) = CO2(in). Component of the ankyrin-1 complex, a multiprotein complex involved in the stability and shape of the erythrocyte membrane. Heterotrimer with RHCE (RHAG)2(RHCE), that transports ammonium and its related derivative methylammonium, in both neutral and ionic forms, across the erythrocyte membrane. The transport of NH4(+) is electrogenic and masks the NH3 transport. Also, may act as a CO2 channel. Moreover in erythrocyte, regulates RHD membrane expression and is associated with rhesus blood group antigen expression. This is Ammonium transporter Rh type A from Rattus norvegicus (Rat).